A 142-amino-acid chain; its full sequence is Large ribosomal subunit protein uL13 (142 aa).

Belongs to the universal ribosomal protein uL13 family. Part of the 50S ribosomal subunit.

This protein is one of the early assembly proteins of the 50S ribosomal subunit, although it is not seen to bind rRNA by itself. It is important during the early stages of 50S assembly. This chain is Large ribosomal subunit protein uL13, found in Proteus mirabilis (strain HI4320).